Reading from the N-terminus, the 570-residue chain is Peptidyl-prolyl cis-trans isomerase FKBP9 (570 aa).

Positions 1–24 (MAFGARGWRRWSLLLLLLWVTGQA) are cleaved as a signal peptide. 4 PPIase FKBP-type domains span residues 54–142 (GDFV…VDIW), 166–254 (SDFV…LDLH), 278–365 (GDFL…IDFH), and 389–477 (GDYL…LELV). N-linked (GlcNAc...) asparagine glycans are attached at residues N174, N286, N302, and N397. EF-hand domains follow at residues 488 to 523 (WNGE…QVAS) and 533 to 568 (NAEM…TKHD). Ca(2+) contacts are provided by D501, D503, N505, E507, E512, D546, N548, D550, K552, and E557. A Prevents secretion from ER motif is present at residues 567–570 (HDEL).

In terms of processing, phosphorylated.

It localises to the endoplasmic reticulum lumen. The enzyme catalyses [protein]-peptidylproline (omega=180) = [protein]-peptidylproline (omega=0). Its activity is regulated as follows. Inhibited by FK506. Its function is as follows. PPIases accelerate the folding of proteins during protein synthesis. The chain is Peptidyl-prolyl cis-trans isomerase FKBP9 (Fkbp9) from Rattus norvegicus (Rat).